The sequence spans 403 residues: Phosphopentomutase (403 aa).

Positions 13, 298, 303, 339, 340, and 351 each coordinate Mn(2+).

It belongs to the phosphopentomutase family. It depends on Mn(2+) as a cofactor.

The protein localises to the cytoplasm. The enzyme catalyses 2-deoxy-alpha-D-ribose 1-phosphate = 2-deoxy-D-ribose 5-phosphate. The catalysed reaction is alpha-D-ribose 1-phosphate = D-ribose 5-phosphate. It participates in carbohydrate degradation; 2-deoxy-D-ribose 1-phosphate degradation; D-glyceraldehyde 3-phosphate and acetaldehyde from 2-deoxy-alpha-D-ribose 1-phosphate: step 1/2. In terms of biological role, isomerase that catalyzes the conversion of deoxy-ribose 1-phosphate (dRib-1-P) and ribose 1-phosphate (Rib-1-P) to deoxy-ribose 5-phosphate (dRib-5-P) and ribose 5-phosphate (Rib-5-P), respectively. This chain is Phosphopentomutase, found in Streptococcus pneumoniae serotype 4 (strain ATCC BAA-334 / TIGR4).